The sequence spans 368 residues: Probable endopolygalacturonase I (368 aa).

A signal peptide spans 1–18 (MHSFQLLGLAALGSLVAA). Positions 19–31 (APSPSRVSDLTER) are excised as a propeptide. Cysteines 35 and 50 form a disulfide. PbH1 repeat units follow at residues 162 to 192 (ANNLHLTDITIDNSDGDSKGGHNTDGFDISE), 193 to 214 (SNGVYISGANVKNQDDCIAINS), 215 to 235 (GKNIEFTGGTCSGGHGLSIGS), 244 to 265 (VQGVKITDSTVTNSDNGIRIKT), 273 to 295 (VSDVTYSNIKLSGIHKKGIVIQQ), and 307 to 328 (SNGIPIKDVTVDGITGSVDSKA). Residue aspartate 207 is the Proton donor of the active site. A disulfide bond links cysteine 209 and cysteine 225. Histidine 229 is a catalytic residue. Disulfide bonds link cysteine 335/cysteine 340 and cysteine 359/cysteine 368.

It belongs to the glycosyl hydrolase 28 family.

The protein localises to the secreted. The enzyme catalyses (1,4-alpha-D-galacturonosyl)n+m + H2O = (1,4-alpha-D-galacturonosyl)n + (1,4-alpha-D-galacturonosyl)m.. Functionally, involved in maceration and soft-rotting of plant tissue. Hydrolyzes the 1,4-alpha glycosidic bonds of de-esterified pectate in the smooth region of the plant cell wall. The protein is Probable endopolygalacturonase I (pgaI) of Aspergillus terreus (strain NIH 2624 / FGSC A1156).